The following is a 199-amino-acid chain: WASH complex subunit 3 (199 aa).

Residues 47 to 76 (VCEEKLSALSLRIQQIETTLNILEAKLSSI) are a coiled coil. Polar residues predominate over residues 93–120 (NISNGHLPSQPDAQSVVVSPQSDNNSMN). 2 disordered regions span residues 93-136 (NISN…NITT) and 170-199 (PDLL…SFSD). Residues 183–192 (GEPEAEESSD) show a composition bias toward acidic residues.

The protein belongs to the CCDC53 family. In terms of assembly, component of the WASH complex.

This chain is WASH complex subunit 3, found in Xenopus laevis (African clawed frog).